A 588-amino-acid polypeptide reads, in one-letter code: Adenine deaminase (588 aa).

This sequence belongs to the metallo-dependent hydrolases superfamily. Adenine deaminase family. Homodimer. Requires Mn(2+) as cofactor.

It carries out the reaction adenine + H2O + H(+) = hypoxanthine + NH4(+). The sequence is that of Adenine deaminase from Escherichia coli O45:K1 (strain S88 / ExPEC).